Consider the following 356-residue polypeptide: Alanine racemase, catabolic (356 aa).

Lys-35 serves as the catalytic Proton acceptor; specific for D-alanine. At Lys-35 the chain carries N6-(pyridoxal phosphate)lysine. Substrate is bound at residue Arg-130. Catalysis depends on Tyr-253, which acts as the Proton acceptor; specific for L-alanine. Substrate is bound at residue Met-301.

Belongs to the alanine racemase family. It depends on pyridoxal 5'-phosphate as a cofactor.

It catalyses the reaction L-alanine = D-alanine. Its function is as follows. Isomerizes L-alanine to D-alanine which is then oxidized to pyruvate by DadA. The sequence is that of Alanine racemase, catabolic (dadX) from Salmonella typhi.